The chain runs to 192 residues: Elongation factor P (192 aa).

Belongs to the elongation factor P family.

It is found in the cytoplasm. Its pathway is protein biosynthesis; polypeptide chain elongation. Its function is as follows. Involved in peptide bond synthesis. Stimulates efficient translation and peptide-bond synthesis on native or reconstituted 70S ribosomes in vitro. Probably functions indirectly by altering the affinity of the ribosome for aminoacyl-tRNA, thus increasing their reactivity as acceptors for peptidyl transferase. This Aquifex aeolicus (strain VF5) protein is Elongation factor P (efp).